We begin with the raw amino-acid sequence, 80 residues long: Large ribosomal subunit protein eL13 (80 aa).

Belongs to the eukaryotic ribosomal protein eL13 family.

This Aeropyrum pernix (strain ATCC 700893 / DSM 11879 / JCM 9820 / NBRC 100138 / K1) protein is Large ribosomal subunit protein eL13.